Reading from the N-terminus, the 245-residue chain is DNA repair protein RecO (245 aa).

Belongs to the RecO family.

Its function is as follows. Involved in DNA repair and RecF pathway recombination. This chain is DNA repair protein RecO, found in Anaplasma phagocytophilum (strain HZ).